Reading from the N-terminus, the 411-residue chain is Adenylosuccinate synthetase (411 aa).

GTP is bound by residues 11 to 17 (GDEGKGK) and 39 to 41 (GHT). Aspartate 12 functions as the Proton acceptor in the catalytic mechanism. Aspartate 12 and glycine 39 together coordinate Mg(2+). Residues 12–15 (DEGK), 37–40 (NAGH), threonine 121, arginine 135, glutamine 215, threonine 230, and arginine 294 each bind IMP. The active-site Proton donor is the histidine 40. A substrate-binding site is contributed by 290-296 (TTTKRPR). Residues arginine 296, 322–324 (KLD), and 400–402 (STS) each bind GTP.

The protein belongs to the adenylosuccinate synthetase family. In terms of assembly, homodimer. Requires Mg(2+) as cofactor.

The protein resides in the cytoplasm. It carries out the reaction IMP + L-aspartate + GTP = N(6)-(1,2-dicarboxyethyl)-AMP + GDP + phosphate + 2 H(+). It functions in the pathway purine metabolism; AMP biosynthesis via de novo pathway; AMP from IMP: step 1/2. Functionally, plays an important role in the de novo pathway of purine nucleotide biosynthesis. Catalyzes the first committed step in the biosynthesis of AMP from IMP. The polypeptide is Adenylosuccinate synthetase (Helicobacter acinonychis (strain Sheeba)).